We begin with the raw amino-acid sequence, 815 residues long: (-)-kolavenyl diphosphate synthase TPS28, chloroplastic (815 aa).

The transit peptide at 1-51 (MFMSSSSSSHARRPQLSSFSYLHPPLPFPGLSFFNTRDKRVNFDSTRIICI) directs the protein to the chloroplast. Lysine 247 is a binding site for substrate. Residues aspartate 379 and aspartate 381 each coordinate Mg(2+). The DXDD motif signature appears at 379–382 (DIDD). Lysine 465 contacts substrate.

This sequence belongs to the terpene synthase family. Tpsc subfamily. Mg(2+) serves as cofactor.

The protein resides in the plastid. Its subcellular location is the chloroplast. It catalyses the reaction (2E,6E,10E)-geranylgeranyl diphosphate = (-)-kolavenyl diphosphate. Its activity is regulated as follows. Inhibited by high concentrations of magnesium. Its function is as follows. Diterpene synthase that catalyzes the formation of (-)-kolavenyl diphosphate from geranylgeranyl diphosphate (GGPP). The chain is (-)-kolavenyl diphosphate synthase TPS28, chloroplastic from Tripterygium wilfordii (Thunder God vine).